The following is a 547-amino-acid chain: TBCC domain-containing protein 1 (547 aa).

In terms of domain architecture, C-CAP/cofactor C-like spans 304–435 (PHTHRMVVMS…LEDHMAHTGL (132 aa)).

The protein belongs to the TBCC family.

The protein resides in the cytoplasm. It is found in the cytoskeleton. The protein localises to the microtubule organizing center. Its subcellular location is the centrosome. It localises to the spindle pole. In terms of biological role, may play a role in the regulation of centrosome and Golgi apparatus positioning. This chain is TBCC domain-containing protein 1 (tbccd1), found in Xenopus tropicalis (Western clawed frog).